The following is a 141-amino-acid chain: MQLTSFTDYGLRALIYMASLPEGRMTSISEVTDVYGVSRNHMVKIINQLSRAGYVTAVRGKNGGIRLGKPASAIRIGDVVRELEPLSLVNCSSEFCHITPACRLKQALSKAVQSFLMELDNYTLADLVEENQPLYKLLLVE.

Residues 2–129 (QLTSFTDYGL…DNYTLADLVE (128 aa)) enclose the HTH rrf2-type domain. A DNA-binding region (H-T-H motif) is located at residues 28 to 51 (ISEVTDVYGVSRNHMVKIINQLSR). Residues cysteine 91, cysteine 96, and cysteine 102 each contribute to the [2Fe-2S] cluster site.

It depends on [2Fe-2S] cluster as a cofactor.

Functionally, nitric oxide-sensitive repressor of genes involved in protecting the cell against nitrosative stress. May require iron for activity. This Escherichia fergusonii (strain ATCC 35469 / DSM 13698 / CCUG 18766 / IAM 14443 / JCM 21226 / LMG 7866 / NBRC 102419 / NCTC 12128 / CDC 0568-73) protein is HTH-type transcriptional repressor NsrR.